Here is a 558-residue protein sequence, read N- to C-terminus: CTP synthase (558 aa).

The segment at 1–267 (MAKFVFVTGG…CLEMLDVLNL (267 aa)) is amidoligase domain. Residue serine 13 participates in CTP binding. Residue serine 13 coordinates UTP. ATP is bound by residues 14 to 19 (SIGKGI) and aspartate 71. Mg(2+)-binding residues include aspartate 71 and glutamate 141. CTP-binding positions include 148 to 150 (DIE), 188 to 193 (KTKPTQ), and lysine 224. UTP contacts are provided by residues 188–193 (KTKPTQ) and lysine 224. The Glutamine amidotransferase type-1 domain occupies 292 to 534 (KVALVGKYVQ…IEAAQLRLPA (243 aa)). Residue glycine 354 coordinates L-glutamine. Residue cysteine 381 is the Nucleophile; for glutamine hydrolysis of the active site. Residues 382–385 (LGMQ), glutamate 405, and arginine 462 each bind L-glutamine. Active-site residues include histidine 507 and glutamate 509. A disordered region spans residues 536–558 (PDEALRRQSQTNISAQEKPSRIG). The span at 542–552 (RQSQTNISAQE) shows a compositional bias: polar residues.

This sequence belongs to the CTP synthase family. As to quaternary structure, homotetramer.

The catalysed reaction is UTP + L-glutamine + ATP + H2O = CTP + L-glutamate + ADP + phosphate + 2 H(+). It catalyses the reaction L-glutamine + H2O = L-glutamate + NH4(+). The enzyme catalyses UTP + NH4(+) + ATP = CTP + ADP + phosphate + 2 H(+). It functions in the pathway pyrimidine metabolism; CTP biosynthesis via de novo pathway; CTP from UDP: step 2/2. Its activity is regulated as follows. Allosterically activated by GTP, when glutamine is the substrate; GTP has no effect on the reaction when ammonia is the substrate. The allosteric effector GTP functions by stabilizing the protein conformation that binds the tetrahedral intermediate(s) formed during glutamine hydrolysis. Inhibited by the product CTP, via allosteric rather than competitive inhibition. Its function is as follows. Catalyzes the ATP-dependent amination of UTP to CTP with either L-glutamine or ammonia as the source of nitrogen. Regulates intracellular CTP levels through interactions with the four ribonucleotide triphosphates. The polypeptide is CTP synthase (Prochlorococcus marinus (strain MIT 9303)).